A 433-amino-acid polypeptide reads, in one-letter code: C2H2 type master regulator of conidiophore development brlA (433 aa).

Disordered regions lie at residues 24-49 (SDCPSMTSSFSPLDSPTPTPTSLYSQ), 240-269 (KSHTPSTPHRSVSMGTPSGSDTPVSRISGH), and 286-306 (MMQRHRQPSRKPSKKQLLRSN). A compositionally biased stretch (low complexity) spans 30–49 (TSSFSPLDSPTPTPTSLYSQ). A compositionally biased stretch (polar residues) spans 240–264 (KSHTPSTPHRSVSMGTPSGSDTPVS). Residues 288-302 (QRHRQPSRKPSKKQL) show a composition bias toward basic residues. 2 consecutive C2H2-type zinc fingers follow at residues 321-345 (FKCKEPGCKGRFKRQEHLKRHMKSH) and 351-376 (HVCWVPGCHRAFSRSDNLNAHYTKTH). Residues 391-423 (ETSQDFDPDFRGQLTPDGRPIYGSKLEDSMPDC) are disordered.

The protein resides in the nucleus. BrlA, abaA and wetA are pivotal regulators of conidiophore development and conidium maturation. They act individually and together to regulate their own expression and that of numerous other sporulation-specific genes. Binds promoters of target genes at brlA response elements (BREs) containing the conserved sequence 5'-(C/A)(A/G)AGGG(G/A)-3'. Regulates genes involved in conidiogenesis. The polypeptide is C2H2 type master regulator of conidiophore development brlA (Penicillium digitatum (strain PHI26 / CECT 20796) (Green mold)).